Reading from the N-terminus, the 462-residue chain is GTPase Der (462 aa).

EngA-type G domains lie at 3–170 and 201–372; these read ITIA…TSQK and IKIA…FNSI. Residues 9-16, 57-61, 122-125, 207-214, 254-258, and 319-322 each bind GTP; these read GRTNVGKS, DTPGI, NKIE, GKPNVGKS, DTAGI, and NKND. The KH-like domain occupies 373–457; the sequence is KKIHTSKITE…SIVLYFKSSK (85 aa).

It belongs to the TRAFAC class TrmE-Era-EngA-EngB-Septin-like GTPase superfamily. EngA (Der) GTPase family. In terms of assembly, associates with the 50S ribosomal subunit.

In terms of biological role, GTPase that plays an essential role in the late steps of ribosome biogenesis. The chain is GTPase Der from Buchnera aphidicola subsp. Baizongia pistaciae (strain Bp).